The primary structure comprises 318 residues: MSNDHPQPLDAAEIPRFAGIPTFMRLPAFTDPAALQVGLIGVPWDGGTTNRAGARHGPREVRNLSSLMRKVHHVSRIAPYDLVRVGDLGDAPVNPIDLLDSLRRIEGFYRQVHAAGTLPLSVGGDHLVTLPIFRALGRERPLGMVHFDAHSDTNDRYFGDNPYTHGTPFRRAIEEGLLDPLRTVQIGIRGSVYSPDDDAFARECGIRVIHMEEFVELGVEATLAEARRVVGAGPTYVSFDVDVLDPAFAPGTGTPEIGGMTSLQAQQLVRGLRGLDLVGADVVEVSPPFDVGGATALVGATMMFELLCLLAESAARSA.

Mn(2+) is bound by residues His-126, Asp-148, His-150, Asp-152, Asp-240, and Asp-242.

It belongs to the arginase family. Agmatinase subfamily. In terms of assembly, homohexamer. Mn(2+) serves as cofactor.

The catalysed reaction is 3-guanidinopropanoate + H2O = urea + beta-alanine. Its function is as follows. Catalyzes the hydrolysis of 3-guanidinopropanoate to beta-alanine and urea. Possesses low activity against 4-guanidinobutanoate. Has no activity against arginine and agmatine. The chain is Guanidinopropionase (gpuA) from Pseudomonas aeruginosa (strain ATCC 15692 / DSM 22644 / CIP 104116 / JCM 14847 / LMG 12228 / 1C / PRS 101 / PAO1).